A 125-amino-acid polypeptide reads, in one-letter code: Small ribosomal subunit protein uS12 (125 aa).

Positions 9–31 (RQGREVEKIKSKSPAMENSPQRR) are disordered. At Asp89 the chain carries 3-methylthioaspartic acid. The disordered stretch occupies residues 105 to 125 (QGVKDRKQSRSKYGAKRPKAK). Positions 113-125 (SRSKYGAKRPKAK) are enriched in basic residues.

Belongs to the universal ribosomal protein uS12 family. Part of the 30S ribosomal subunit. Contacts proteins S8 and S17. May interact with IF1 in the 30S initiation complex.

Functionally, with S4 and S5 plays an important role in translational accuracy. In terms of biological role, interacts with and stabilizes bases of the 16S rRNA that are involved in tRNA selection in the A site and with the mRNA backbone. Located at the interface of the 30S and 50S subunits, it traverses the body of the 30S subunit contacting proteins on the other side and probably holding the rRNA structure together. The combined cluster of proteins S8, S12 and S17 appears to hold together the shoulder and platform of the 30S subunit. This is Small ribosomal subunit protein uS12 from Polaromonas naphthalenivorans (strain CJ2).